The sequence spans 107 residues: UPF0145 protein ECA2666 (107 aa).

Belongs to the UPF0145 family.

In Pectobacterium atrosepticum (strain SCRI 1043 / ATCC BAA-672) (Erwinia carotovora subsp. atroseptica), this protein is UPF0145 protein ECA2666.